The chain runs to 359 residues: Dihydroorotate dehydrogenase (quinone) (359 aa).

FMN contacts are provided by residues 68-72 and Ala92; that span reads AGFDK. Lys72 provides a ligand contact to substrate. Residue 117 to 121 coordinates substrate; that stretch reads NAYGF. Positions 146 and 179 each coordinate FMN. Asn179 serves as a coordination point for substrate. Ser182 acts as the Nucleophile in catalysis. Position 184 (Asn184) interacts with substrate. Residues Lys215 and Thr243 each contribute to the FMN site. 244-245 is a substrate binding site; it reads NT. Residues Gly263, Gly292, and 313-314 contribute to the FMN site; that span reads YT.

It belongs to the dihydroorotate dehydrogenase family. Type 2 subfamily. In terms of assembly, monomer. The cofactor is FMN.

The protein localises to the cell membrane. It carries out the reaction (S)-dihydroorotate + a quinone = orotate + a quinol. Its pathway is pyrimidine metabolism; UMP biosynthesis via de novo pathway; orotate from (S)-dihydroorotate (quinone route): step 1/1. Its function is as follows. Catalyzes the conversion of dihydroorotate to orotate with quinone as electron acceptor. This Nautilia profundicola (strain ATCC BAA-1463 / DSM 18972 / AmH) protein is Dihydroorotate dehydrogenase (quinone).